The chain runs to 149 residues: Ribosome-binding factor A (149 aa).

Basic and acidic residues predominate over residues 116-125 (TLFEELHPNP). The segment at 116–149 (TLFEELHPNPEEDDGDTDAETLLEDSESGIERET) is disordered. Over residues 126 to 143 (EEDDGDTDAETLLEDSES) the composition is skewed to acidic residues.

The protein belongs to the RbfA family. Monomer. Binds 30S ribosomal subunits, but not 50S ribosomal subunits or 70S ribosomes.

The protein localises to the cytoplasm. Its function is as follows. One of several proteins that assist in the late maturation steps of the functional core of the 30S ribosomal subunit. Associates with free 30S ribosomal subunits (but not with 30S subunits that are part of 70S ribosomes or polysomes). Required for efficient processing of 16S rRNA. May interact with the 5'-terminal helix region of 16S rRNA. The polypeptide is Ribosome-binding factor A (Leptospira biflexa serovar Patoc (strain Patoc 1 / Ames)).